A 567-amino-acid polypeptide reads, in one-letter code: Major facilitator superfamily transporter MG061 (567 aa).

The next 12 helical transmembrane spans lie at 15–35 (ITLW…WFVI), 78–98 (WTIT…VLKF), 104–124 (VLIM…GDPL), 193–213 (GYAL…TLVV), 230–250 (ILSN…FTPF), 264–284 (VYIM…FLWF), 321–341 (LIGV…PAWF), 363–383 (TGLA…FVVF), 405–425 (IVVL…SAAG), 426–446 (FALI…LSSS), 462–482 (LPIL…LFDI), and 503–523 (PGVI…NLIV).

The protein belongs to the major facilitator superfamily.

The protein resides in the cell membrane. This chain is Major facilitator superfamily transporter MG061, found in Mycoplasma genitalium (strain ATCC 33530 / DSM 19775 / NCTC 10195 / G37) (Mycoplasmoides genitalium).